The chain runs to 464 residues: L-cystine uptake protein TcyP (464 aa).

10 helical membrane passes run 3–23, 34–54, 73–93, 107–127, 184–204, 225–245, 263–283, 347–367, 371–391, and 395–415; these read TLLV…LYYM, VFTA…IYEP, YVKL…ISAF, GLII…GIAA, PTST…FIGV, IVMR…LALM, FVLA…LLIA, AGIY…IDPL, FILT…GVGG, and FAAL…ALVI.

The protein belongs to the dicarboxylate/amino acid:cation symporter (DAACS) (TC 2.A.23) family.

The protein localises to the membrane. Mediates uptake of L-cystine, the oxidized form of L-cysteine. The sequence is that of L-cystine uptake protein TcyP from Bacillus thuringiensis (strain Al Hakam).